The sequence spans 402 residues: Bisdemethoxycurcumin synthase (402 aa).

Cys-174 serves as the catalytic Acyl-thioester intermediate.

It belongs to the thiolase-like superfamily. Chalcone/stilbene synthases family. Homodimer.

It catalyses the reaction 2 4-coumaroyl-CoA + malonyl-CoA + H2O + H(+) = bisdemethoxycurcumin + 2 CO2 + 3 CoA. Its pathway is secondary metabolite biosynthesis; flavonoid biosynthesis. Functionally, plant-specific type III polyketide synthase (PKS) that catalyzes the one-pot formation of the C6-C7-C6 diarylheptanoid scaffold of bisdemethoxycurcumin by the condensation of two molecules of 4-coumaroyl-CoA and one molecule of malonyl-CoA. In Oryza sativa subsp. japonica (Rice), this protein is Bisdemethoxycurcumin synthase.